Here is a 504-residue protein sequence, read N- to C-terminus: Anaerobic nitric oxide reductase transcription regulator NorR (504 aa).

Aspartate 57 is modified (4-aspartylphosphate). The Sigma-54 factor interaction domain maps to 187–416; sequence MIGLSPGMTQ…LEHAIHRAVV (230 aa). ATP-binding positions include 215–222 and 278–287; these read GETGTGKE and ADNGTLFLDE. The segment at residues 479-498 is a DNA-binding region (H-T-H motif); it reads WAACARMLETDVANLHRLAK.

The protein operates within nitrogen metabolism; nitric oxide reduction. Its function is as follows. Required for the expression of anaerobic nitric oxide (NO) reductase, acts as a transcriptional activator for at least the norVW operon. Activation also requires sigma-54. The chain is Anaerobic nitric oxide reductase transcription regulator NorR from Escherichia coli O45:K1 (strain S88 / ExPEC).